A 289-amino-acid polypeptide reads, in one-letter code: Delta-sarcoglycan (289 aa).

The Cytoplasmic portion of the chain corresponds to 1-35 (MPQEQYTHHRSTMPGSVGPQVYKVGIYGWRKRCLY). A helical; Signal-anchor for type II membrane protein transmembrane segment spans residues 36–56 (FFVLLLMILILVNLAMTIWIL). The Extracellular segment spans residues 57–289 (KVMNFTIDGM…TCQINTSVCL (233 aa)). 2 N-linked (GlcNAc...) asparagine glycosylation sites follow: Asn-60 and Asn-108. Intrachain disulfides connect Cys-263-Cys-288 and Cys-265-Cys-281. Asn-284 carries N-linked (GlcNAc...) asparagine glycosylation.

Belongs to the sarcoglycan beta/delta/gamma/zeta family. As to quaternary structure, interacts with FLNC and DAG1. Cross-link to form 2 major subcomplexes: one consisting of SGCB, SGCD and SGCG and the other consisting of SGCB and SGCD. The association between SGCB and SGCG is particularly strong while SGCA is loosely associated with the other sarcoglycans. In terms of processing, glycosylated. Disulfide bonds are present. As to expression, most strongly expressed in skeletal and cardiac muscle. Also detected in smooth muscle. Weak expression in brain and lung.

The protein localises to the cell membrane. It is found in the sarcolemma. The protein resides in the cytoplasm. Its subcellular location is the cytoskeleton. Functionally, component of the sarcoglycan complex, a subcomplex of the dystrophin-glycoprotein complex which forms a link between the F-actin cytoskeleton and the extracellular matrix. This chain is Delta-sarcoglycan (SGCD), found in Homo sapiens (Human).